Consider the following 271-residue polypeptide: MAAGGRMEDGSLDITQSIEDDPLLDAQLLPHHSLQAHFRPRFHPLPTVIIVNLLWFIHLVFVVLAFLTGVLCSYPNPNEDKCPGNYTNPLKVQTVIILGKVILWILHLLLECYIQYHHSKIRNRGYNLIYRSTRHLKRLALMIQSSGNTVLLLILCMQHSFPEPGRLYLDLILAILALELICSLICLLIYTVKIRRFNKAKPEPDILEEEKIYAYPSNITSETGFRTISSLEEIVEKQGDTIEYLKRHNALLSKRLLALTSSDLGCQPSRT.

Residues 1–46 (MAAGGRMEDGSLDITQSIEDDPLLDAQLLPHHSLQAHFRPRFHPLP) lie on the Cytoplasmic side of the membrane. Threonine 15 is subject to Phosphothreonine. Serine 17 is modified (phosphoserine). Residues 47-67 (TVIIVNLLWFIHLVFVVLAFL) traverse the membrane as a helical segment. Residues 68–93 (TGVLCSYPNPNEDKCPGNYTNPLKVQ) lie on the Lumenal side of the membrane. A helical transmembrane segment spans residues 94 to 114 (TVIILGKVILWILHLLLECYI). At 115–138 (QYHHSKIRNRGYNLIYRSTRHLKR) the chain is on the cytoplasmic side. Residues 139–159 (LALMIQSSGNTVLLLILCMQH) form a helical membrane-spanning segment. Residues 160–171 (SFPEPGRLYLDL) lie on the Lumenal side of the membrane. The chain crosses the membrane as a helical span at residues 172-192 (ILAILALELICSLICLLIYTV). Over 193–271 (KIRRFNKAKP…SDLGCQPSRT (79 aa)) the chain is Cytoplasmic. Tyrosine 213 is modified (phosphotyrosine). Residues serine 229, serine 230, and serine 269 each carry the phosphoserine modification.

The protein belongs to the TMEM192 family. In terms of assembly, homodimer. Post-translationally, not N-glycosylated. As to expression, strongly expressed in kidney, liver, lung and pancreas.

It is found in the lysosome membrane. It localises to the late endosome. The protein is Transmembrane protein 192 (TMEM192) of Homo sapiens (Human).